The following is a 131-amino-acid chain: uncharacterized protein (131 aa).

Its subcellular location is the plastid. The protein localises to the chloroplast. This is an uncharacterized protein from Chlorella vulgaris (Green alga).